A 313-amino-acid chain; its full sequence is Methionyl-tRNA formyltransferase (313 aa).

Residue 109–112 (SLLP) participates in (6S)-5,6,7,8-tetrahydrofolate binding.

This sequence belongs to the Fmt family.

It catalyses the reaction L-methionyl-tRNA(fMet) + (6R)-10-formyltetrahydrofolate = N-formyl-L-methionyl-tRNA(fMet) + (6S)-5,6,7,8-tetrahydrofolate + H(+). Its function is as follows. Attaches a formyl group to the free amino group of methionyl-tRNA(fMet). The formyl group appears to play a dual role in the initiator identity of N-formylmethionyl-tRNA by promoting its recognition by IF2 and preventing the misappropriation of this tRNA by the elongation apparatus. The chain is Methionyl-tRNA formyltransferase from Pelotomaculum thermopropionicum (strain DSM 13744 / JCM 10971 / SI).